The following is a 246-amino-acid chain: UDP-N-acetyl-D-mannosaminuronic acid transferase (246 aa).

Belongs to the glycosyltransferase 26 family.

The enzyme catalyses UDP-N-acetyl-alpha-D-mannosaminouronate + N-acetyl-alpha-D-glucosaminyl-di-trans,octa-cis-undecaprenyl diphosphate = beta-D-ManNAcA-(1-&gt;4)-alpha-D-GlcNAc-di-trans,octa-cis-undecaprenyl diphosphate + UDP + H(+). Its pathway is bacterial outer membrane biogenesis; enterobacterial common antigen biosynthesis. Its function is as follows. Catalyzes the synthesis of Und-PP-GlcNAc-ManNAcA (Lipid II), the second lipid-linked intermediate involved in enterobacterial common antigen (ECA) synthesis. The sequence is that of UDP-N-acetyl-D-mannosaminuronic acid transferase from Escherichia coli O6:K15:H31 (strain 536 / UPEC).